The primary structure comprises 161 residues: MSTTKAVIPGSFDPITYGHIDIIDRSADRFDELHICVLKNSGKSGTFSIEERIALIEESVKHLNNVTVHHFNGLLVDFCDKIGAETIIRGLRAVSDFEYELRLTSMNKKLNSNVETMYMMTSTNYSFISSSVVKEVAAYKANVSDFVPVHVEKALNEKFKK.

Position 11 (serine 11) interacts with substrate. Residues 11 to 12 and histidine 19 contribute to the ATP site; that span reads SF. Substrate is bound by residues lysine 43, leucine 75, and arginine 89. Residues 90 to 92, glutamate 100, and 125 to 131 each bind ATP; these read GLR and YSFISSS.

This sequence belongs to the bacterial CoaD family. Homohexamer. Mg(2+) is required as a cofactor.

It localises to the cytoplasm. The enzyme catalyses (R)-4'-phosphopantetheine + ATP + H(+) = 3'-dephospho-CoA + diphosphate. Its pathway is cofactor biosynthesis; coenzyme A biosynthesis; CoA from (R)-pantothenate: step 4/5. In terms of biological role, reversibly transfers an adenylyl group from ATP to 4'-phosphopantetheine, yielding dephospho-CoA (dPCoA) and pyrophosphate. This chain is Phosphopantetheine adenylyltransferase, found in Staphylococcus saprophyticus subsp. saprophyticus (strain ATCC 15305 / DSM 20229 / NCIMB 8711 / NCTC 7292 / S-41).